Here is a 143-residue protein sequence, read N- to C-terminus: Nucleoside diphosphate kinase (143 aa).

The ATP site is built by K11, F59, R87, T93, R104, and N114. The active-site Pros-phosphohistidine intermediate is H117.

Belongs to the NDK family. In terms of assembly, homotetramer. Mg(2+) is required as a cofactor.

Its subcellular location is the cytoplasm. The catalysed reaction is dZDP + ATP = dZTP + ADP. It carries out the reaction a 2'-deoxyribonucleoside 5'-diphosphate + ATP = a 2'-deoxyribonucleoside 5'-triphosphate + ADP. The enzyme catalyses a ribonucleoside 5'-diphosphate + ATP = a ribonucleoside 5'-triphosphate + ADP. It functions in the pathway purine metabolism. Functionally, major role in the synthesis of nucleoside triphosphates other than ATP. The ATP gamma phosphate is transferred to the NDP beta phosphate via a ping-pong mechanism, using a phosphorylated active-site intermediate. In terms of biological role, (Microbial infection) Catalyzes the phosphorylation of dZDP to dZTP, when the bacterium is infected by a phage that produces the substrate for the synthesis of dZTP (2- amino-2'-deoxyadenosine 5'-triphosphate), which is then used by the phage as a DNA polymerase substrate. In Salmonella paratyphi C (strain RKS4594), this protein is Nucleoside diphosphate kinase.